We begin with the raw amino-acid sequence, 112 residues long: Nitrogen regulatory protein P-II (112 aa).

Tyr51 bears the O-UMP-tyrosine mark.

Belongs to the P(II) protein family. In terms of assembly, homotrimer.

Its function is as follows. In nitrogen-limiting conditions, when the ratio of Gln to 2-ketoglutarate decreases, P-II is uridylylated to P-II-UMP. P-II-UMP allows the deadenylation of glutamine synthetase (GS), thus activating the enzyme. Conversely, in nitrogen excess P-II is deuridylated and promotes the adenylation of GS. P-II indirectly controls the transcription of the GS gene (glnA). P-II prevents NR-II-catalyzed conversion of NR-I to NR-I-phosphate, the transcriptional activator of glnA. When P-II is uridylylated to P-II-UMP, these events are reversed. The chain is Nitrogen regulatory protein P-II (glnB) from Rhizobium etli (strain ATCC 51251 / DSM 11541 / JCM 21823 / NBRC 15573 / CFN 42).